A 182-amino-acid polypeptide reads, in one-letter code: MSENDGIHIEYVDEQELKREFRRFMSDPETREKAANYLYESLVDETILGIAYEVHHANKTGSGAAVEGEPEDSKPYTIVDQPDTDVFGSSNTKKAIDCHCPNCNRIVAASRFAPHLEKCMGMGRNSSRIASRRIANTRDVGTGNYFGGDEDDEDDADWSGEKRKKKISQVRTNGSKKNGKTS.

The segment at 61 to 84 (GSGAAVEGEPEDSKPYTIVDQPDT) is disordered. The SGF11-type zinc finger occupies 98–119 (CHCPNCNRIVAASRFAPHLEKC). Positions 133 to 182 (RIANTRDVGTGNYFGGDEDDEDDADWSGEKRKKKISQVRTNGSKKNGKTS) are disordered. The span at 148 to 158 (GDEDDEDDADW) shows a compositional bias: acidic residues.

Belongs to the SGF11 family. Component of some SAGA transcription coactivator-HAT complexes. Within the SAGA complex, participates in a subcomplex of SAGA called the DUB module (deubiquitination module).

Its subcellular location is the nucleus. In terms of biological role, component of the transcription regulatory histone acetylation (HAT) complex SAGA, a multiprotein complex that activates transcription by remodeling chromatin and mediating histone acetylation and deubiquitination. Within the SAGA complex, participates in a subcomplex that specifically deubiquitinates histone H2B. The SAGA complex is recruited to specific gene promoters by activators, where it is required for transcription. In Anopheles gambiae (African malaria mosquito), this protein is SAGA-associated factor 11 homolog.